The primary structure comprises 436 residues: Cytochrome P450 monooxygenase phqO (436 aa).

C377 is a heme binding site.

This sequence belongs to the cytochrome P450 family. It depends on heme as a cofactor.

The protein operates within alkaloid biosynthesis. Its function is as follows. Cytochrome P450 monooxygenase; part of the gene cluster that mediates the biosynthesis of paraherquamide, a fungal indole alkaloid that belongs to a family of natural products containing a characteristic bicyclo[2.2.2]diazaoctane core. The first steps in the biosynthesis of paraherquamide is the production of the beta-methyl-proline precursor from L-isoleucine. They require oxidation of a terminally hydroxylated L-isoleucine to the corresponding aldehyde by enzymes which have still to be identified. Spontaneous cyclization and dehydration would yield the 4-methyl pyrolline-5-carboxylic acid, which is then reduced by the pyrroline-5-carboxylate reductase phqD leading to the beta-methyl-proline precursor. The next step of paraherquamide biosynthesis involves coupling of beta-methyl-proline and L-tryptophan by the bimodular NRPS phqB, to produce a monooxopiperazine intermediate. The reductase (R) domain of phqB utilizes NADPH for hydride transfer to reduce the thioester bond of the T domain-tethered linear dipeptide to a hemithioaminal intermediate, which spontaneously cleaves the C-S bond to release the aldehyde product. This compound undergoes spontaneous cyclization and dehydration to give a dienamine which is reverse prenylated at C-2 by the reverse prenyltransferase phqJ. The other prenyltransferase present in the cluster, phqI may be a redundant gene in the pathway. During biosynthetic assembly, the key step to produce the polycyclic core is catalyzed by the bifunctional reductase and intramolecular [4+2] Diels-Alderase, phqE, resulting in formation of the [2.2.2] diazaoctane intermediate preparaherquamide. Following formation of preparaherquamide, an indole 2,3-epoxidation-initiated pinacol-like rearrangement is catalyzed by the phqK FAD-dependent monooxygenase. The prenyltransferase phqA, the cytochrome P450 monooxygenase phqL, and the FAD-linked oxidoreductase phqH (or the cytochrome P450 monooxygenase phqM), are proposed to be involved in the formation of the pyran ring. The FAD-dependent monooxygenase phqK is likely responsible for generation of the spiro-oxindole, and the N-methylation is likely mediated by the phqN methyltransferase leading to the isolable natural product paraherquamide F. However, the order of these biosynthetic steps has still to be determined. In late-stage paraherquamide biosynthesis, the third P450 monooxygenase, phqO, is probably responsible for the C-14 hydroxylation, transforming paraherquamide F to paraherquamide G, and paraherquamide E to the final product paraherquamide A. The expansion from the 6-membered ring pyran (in paraherquamides F and G) to the 7-membered dioxepin ring (in paraherquamides A and E) represents a poorly understood but intriguing process that probably involves the 2-oxoglutarate-dependent dioxygenase phqC. Finally, the remaining members of the paraherquamide cluster, including phqI as well as phqM (or phqH), do not have a clearly prescribed role and appear to be redundant. The protein is Cytochrome P450 monooxygenase phqO of Penicillium fellutanum.